The chain runs to 313 residues: tRNA dimethylallyltransferase (313 aa).

20-27 (GPTGTGKS) contacts ATP. 22–27 (TGTGKS) is a binding site for substrate.

The protein belongs to the IPP transferase family. As to quaternary structure, monomer. Mg(2+) is required as a cofactor.

The catalysed reaction is adenosine(37) in tRNA + dimethylallyl diphosphate = N(6)-dimethylallyladenosine(37) in tRNA + diphosphate. Catalyzes the transfer of a dimethylallyl group onto the adenine at position 37 in tRNAs that read codons beginning with uridine, leading to the formation of N6-(dimethylallyl)adenosine (i(6)A). The polypeptide is tRNA dimethylallyltransferase (Kocuria rhizophila (strain ATCC 9341 / DSM 348 / NBRC 103217 / DC2201)).